The following is a 74-amino-acid chain: Peptide Im-4 (74 aa).

Residues methionine 1–alanine 22 form the signal peptide. Residue lysine 39 is modified to Lysine amide; partial. The propeptide occupies glycine 40–tyrosine 74.

It belongs to the non-disulfide-bridged peptide (NDBP) superfamily. Short antimicrobial peptide (group 4) family. As to expression, expressed by the venom gland.

It localises to the secreted. The protein resides in the target cell membrane. In terms of biological role, antimicrobial peptide that probably forms pores in target membranes. Has antibacterial activity against Gram-positive bacteria S.aureus NBRC 13276 (MIC=5-10 uM) and B.subtilis NBRC 3009 (MIC=2.5-5 uM) but not against Gram-negative bacterium E.coli NBRC 3972. The polypeptide is Peptide Im-4 (Isometrus maculatus (Lesser brown scorpion)).